Consider the following 488-residue polypeptide: Bifunctional protein GlmU (488 aa).

The pyrophosphorylase stretch occupies residues 1–237 (MPRTRTPLAA…VEEASGVNDR (237 aa)). UDP-N-acetyl-alpha-D-glucosamine-binding positions include 13–16 (LAAG), lysine 27, glutamine 82, 87–88 (GT), 110–112 (SGD), glycine 149, glutamate 164, asparagine 179, and asparagine 235. Position 112 (aspartate 112) interacts with Mg(2+). Asparagine 235 lines the Mg(2+) pocket. The tract at residues 238-258 (VELSRANRVMVGRLAEAFMRA) is linker. Residues 259-488 (GVTIEDPARF…KGRPAARRAS (230 aa)) are N-acetyltransferase. UDP-N-acetyl-alpha-D-glucosamine is bound by residues arginine 341 and lysine 359. Histidine 371 serves as the catalytic Proton acceptor. UDP-N-acetyl-alpha-D-glucosamine-binding residues include tyrosine 374 and asparagine 385. Residues alanine 388, 394–395 (NY), serine 413, alanine 431, and arginine 448 contribute to the acetyl-CoA site. Positions 459-488 (AQRQAEKQMKGTATGPASARKGRPAARRAS) are disordered. Over residues 478–488 (RKGRPAARRAS) the composition is skewed to basic residues.

In the N-terminal section; belongs to the N-acetylglucosamine-1-phosphate uridyltransferase family. The protein in the C-terminal section; belongs to the transferase hexapeptide repeat family. As to quaternary structure, homotrimer. Requires Mg(2+) as cofactor.

It is found in the cytoplasm. It carries out the reaction alpha-D-glucosamine 1-phosphate + acetyl-CoA = N-acetyl-alpha-D-glucosamine 1-phosphate + CoA + H(+). It catalyses the reaction N-acetyl-alpha-D-glucosamine 1-phosphate + UTP + H(+) = UDP-N-acetyl-alpha-D-glucosamine + diphosphate. It participates in nucleotide-sugar biosynthesis; UDP-N-acetyl-alpha-D-glucosamine biosynthesis; N-acetyl-alpha-D-glucosamine 1-phosphate from alpha-D-glucosamine 6-phosphate (route II): step 2/2. It functions in the pathway nucleotide-sugar biosynthesis; UDP-N-acetyl-alpha-D-glucosamine biosynthesis; UDP-N-acetyl-alpha-D-glucosamine from N-acetyl-alpha-D-glucosamine 1-phosphate: step 1/1. Its pathway is bacterial outer membrane biogenesis; LPS lipid A biosynthesis. Its function is as follows. Catalyzes the last two sequential reactions in the de novo biosynthetic pathway for UDP-N-acetylglucosamine (UDP-GlcNAc). The C-terminal domain catalyzes the transfer of acetyl group from acetyl coenzyme A to glucosamine-1-phosphate (GlcN-1-P) to produce N-acetylglucosamine-1-phosphate (GlcNAc-1-P), which is converted into UDP-GlcNAc by the transfer of uridine 5-monophosphate (from uridine 5-triphosphate), a reaction catalyzed by the N-terminal domain. The chain is Bifunctional protein GlmU from Anaeromyxobacter sp. (strain K).